A 752-amino-acid chain; its full sequence is Protein GCN20 (752 aa).

At A2 the chain carries N-acetylalanine. ABC transporter domains are found at residues 199 to 464 and 532 to 748; these read IHID…RKNA and IQLQ…AAGV. ATP-binding positions include 232–239 and 565–572; these read GQNGIGKS and GANGCGKT.

This sequence belongs to the ABC transporter superfamily. ABCF family. EF3 subfamily. As to quaternary structure, interacts (via N-terminus) with GCN1 (via C-terminus); this interaction stimulates GCN2 kinase activity in response to amino acid starvation. The GCN1-GCN20 complex interacts with GCN2 on translating ribosomes in amino acid-starved cells; this association stimulates GCN2 kinase activation by uncharged tRNAs, and hence allowing GCN4 translational activation and derepression of amino acid biosynthetic genes. Associates with ribosomes.

In terms of biological role, acts as a positive activator of the GCN2 protein kinase activity in response to in response to low amino acid, carbon, or purine availability. Component of the GCN1-GCN20 complex that forms a complex with GCN2 on translating ribosomes; during this process, GCN20 helps GCN1 to act as a chaperone to facilitate delivery of uncharged tRNAs that enter the A site of ribosomes to the tRNA-binding domain of GCN2, and hence stimulating GCN2 kinase activity. Participates in gene-specific mRNA translation activation, such as the transcriptional activator GCN4, by promoting the GCN2-mediated phosphorylation of eukaryotic translation initiation factor 2 (eIF-2-alpha/SUI2) on 'Ser-52', and hence allowing GCN4-mediated reprogramming of amino acid biosynthetic gene expression to alleviate nutrient depletion. The protein is Protein GCN20 of Saccharomyces cerevisiae (strain ATCC 204508 / S288c) (Baker's yeast).